A 358-amino-acid polypeptide reads, in one-letter code: MSCQAFSADSFTTLAGDSLPLLMHHASAADCLPSSASTHTHNMVSAVPSGLSLLQSSKRSHMHLSTSTLGNALSNGPPGLHYPVTPCHYSNQQTTYGMMAAQEMLSASISQTRILQTCSVPHPNMVNGANTLQGSLAPCLYKFPEHGLGGGSCSLSHSFPPLPPAVLSEEPPLGGTKDLRLRSRPPDDPPDMDSPQIRELEKFANDFKLRRIKLGYTQTNVGEALAAVHGSEFSQTTICRFENLQLSFKNACTLKAILAKWLDEAEQAGALFNEKMGMNERKRKRRTTISLGAKEALERSFGEKIKPSSQEIVRMAEGLHLEKEVVRVWFCNRRQREKRVKTSLHHSSYLTKDSPTYR.

A 9aaTAD motif is present at residues 5 to 12 (AFSADSFT). The tract at residues 164 to 195 (PAVLSEEPPLGGTKDLRLRSRPPDDPPDMDSP) is disordered. The span at 177-187 (KDLRLRSRPPD) shows a compositional bias: basic and acidic residues. A POU-specific domain is found at 192–266 (MDSPQIRELE…ILAKWLDEAE (75 aa)). Residues 282 to 341 (KRKRRTTISLGAKEALERSFGEKIKPSSQEIVRMAEGLHLEKEVVRVWFCNRRQREKRVK) constitute a DNA-binding region (homeobox).

The protein belongs to the POU transcription factor family. Class-1 subfamily.

The protein resides in the nucleus. Transcription factor that activates growth hormone and prolactin genes. Specifically binds to the consensus sequence 5'-TAAAT-3'. In Oncorhynchus mykiss (Rainbow trout), this protein is Pituitary-specific positive transcription factor 1 (pou1f1).